The primary structure comprises 151 residues: Sec-independent protein translocase protein TatB (151 aa).

Residues 1-21 traverse the membrane as a helical segment; that stretch reads MFGMSLPEIIIIAVIAVIFLG. Low complexity predominate over residues 120–131; the sequence is NNDPLNNETLNE. The interval 120 to 151 is disordered; it reads NNDPLNNETLNEQPSKPSPNLNLENKEIKKEA. Polar residues predominate over residues 132-142; sequence QPSKPSPNLNL.

It belongs to the TatB family. In terms of assembly, the Tat system comprises two distinct complexes: a TatABC complex, containing multiple copies of TatA, TatB and TatC subunits, and a separate TatA complex, containing only TatA subunits. Substrates initially bind to the TatABC complex, which probably triggers association of the separate TatA complex to form the active translocon.

The protein localises to the cell inner membrane. Functionally, part of the twin-arginine translocation (Tat) system that transports large folded proteins containing a characteristic twin-arginine motif in their signal peptide across membranes. Together with TatC, TatB is part of a receptor directly interacting with Tat signal peptides. TatB may form an oligomeric binding site that transiently accommodates folded Tat precursor proteins before their translocation. This Campylobacter fetus subsp. fetus (strain 82-40) protein is Sec-independent protein translocase protein TatB.